Here is a 425-residue protein sequence, read N- to C-terminus: Enolase (425 aa).

A (2R)-2-phosphoglycerate-binding site is contributed by Gln-163. Residue Glu-205 is the Proton donor of the active site. Asp-242, Glu-286, and Asp-313 together coordinate Mg(2+). The (2R)-2-phosphoglycerate site is built by Lys-338, Arg-367, Ser-368, and Lys-389. Residue Lys-338 is the Proton acceptor of the active site.

The protein belongs to the enolase family. Requires Mg(2+) as cofactor.

It localises to the cytoplasm. The protein localises to the secreted. The protein resides in the cell surface. The catalysed reaction is (2R)-2-phosphoglycerate = phosphoenolpyruvate + H2O. Its pathway is carbohydrate degradation; glycolysis; pyruvate from D-glyceraldehyde 3-phosphate: step 4/5. Its function is as follows. Catalyzes the reversible conversion of 2-phosphoglycerate (2-PG) into phosphoenolpyruvate (PEP). It is essential for the degradation of carbohydrates via glycolysis. The protein is Enolase of Helicobacter hepaticus (strain ATCC 51449 / 3B1).